A 545-amino-acid polypeptide reads, in one-letter code: Membrane protein insertase YidC (545 aa).

The chain crosses the membrane as a helical span at residues 6 to 26 (LILFSALVLVLFLMWDAWQTD). Positions 34–59 (PPPPQPTASSGESSPVLPEAVPDAPP) are disordered. The next 3 membrane-spanning stretches (helical) occupy residues 357 to 377 (LVGNWGWAIVLLTFVVKLVFF), 428 to 448 (GGCLPIVVQIPVFIALYWMLL), and 505 to 525 (PVMFTVFFVMFPAGLVLYWVV).

This sequence belongs to the OXA1/ALB3/YidC family. Type 1 subfamily. In terms of assembly, interacts with the Sec translocase complex via SecD. Specifically interacts with transmembrane segments of nascent integral membrane proteins during membrane integration.

It localises to the cell inner membrane. Functionally, required for the insertion and/or proper folding and/or complex formation of integral membrane proteins into the membrane. Involved in integration of membrane proteins that insert both dependently and independently of the Sec translocase complex, as well as at least some lipoproteins. Aids folding of multispanning membrane proteins. This Nitrosococcus oceani (strain ATCC 19707 / BCRC 17464 / JCM 30415 / NCIMB 11848 / C-107) protein is Membrane protein insertase YidC.